Here is a 551-residue protein sequence, read N- to C-terminus: Hyaluronan synthase 2 (551 aa).

The Cytoplasmic segment spans residues M1 to R11. Residues I12–V32 traverse the membrane as a helical segment. The Extracellular portion of the chain corresponds to G33 to S45. Residues F46 to L66 form a helical membrane-spanning segment. Residues E67 to L374 are Cytoplasmic-facing. A helical transmembrane segment spans residues W375–I395. Over Q396–R402 the chain is Extracellular. A helical membrane pass occupies residues I403–F423. Residues A424 to G429 are Cytoplasmic-facing. The helical transmembrane segment at N430–A450 threads the bilayer. The Extracellular portion of the chain corresponds to K451–T470. Residues I471–G491 form a helical membrane-spanning segment. Residues V492–K509 are Cytoplasmic-facing. The chain crosses the membrane as a helical span at residues I510 to Y530. Residues V531–A551 lie on the Extracellular side of the membrane.

It belongs to the NodC/HAS family. As to quaternary structure, homodimer; dimerization promotes enzymatic activity. It depends on Mg(2+) as a cofactor.

The protein resides in the cell membrane. Its subcellular location is the endoplasmic reticulum membrane. The protein localises to the vesicle. It localises to the golgi apparatus membrane. It is found in the lysosome. It catalyses the reaction [hyaluronan](n) + UDP-N-acetyl-alpha-D-glucosamine = N-acetyl-beta-D-glucosaminyl-(1-&gt;4)-[hyaluronan](n) + UDP + H(+). The catalysed reaction is N-acetyl-beta-D-glucosaminyl-(1-&gt;4)-[hyaluronan](n) + UDP-alpha-D-glucuronate = [hyaluronan](n+1) + UDP + H(+). Its pathway is glycan biosynthesis; hyaluronan biosynthesis. Its function is as follows. Catalyzes the addition of GlcNAc or GlcUA monosaccharides to the nascent hyaluronan polymer. Therefore, it is essential to hyaluronan synthesis a major component of most extracellular matrices that has a structural role in tissues architectures and regulates cell adhesion, migration and differentiation. This is one of three isoenzymes responsible for cellular hyaluronan synthesis and it is particularly responsible for the synthesis of high molecular mass hyaluronan. The sequence is that of Hyaluronan synthase 2 (has2) from Xenopus laevis (African clawed frog).